Reading from the N-terminus, the 202-residue chain is Imidazoleglycerol-phosphate dehydratase (202 aa).

Belongs to the imidazoleglycerol-phosphate dehydratase family.

The protein localises to the cytoplasm. The enzyme catalyses D-erythro-1-(imidazol-4-yl)glycerol 3-phosphate = 3-(imidazol-4-yl)-2-oxopropyl phosphate + H2O. It functions in the pathway amino-acid biosynthesis; L-histidine biosynthesis; L-histidine from 5-phospho-alpha-D-ribose 1-diphosphate: step 6/9. This is Imidazoleglycerol-phosphate dehydratase from Chelativorans sp. (strain BNC1).